The primary structure comprises 490 residues: Cytochrome P450 71A25 (490 aa).

The helical transmembrane segment at Met-1–Lys-21 threads the bilayer. Cys-431 lines the heme pocket.

The protein belongs to the cytochrome P450 family. The cofactor is heme.

The protein resides in the membrane. This is Cytochrome P450 71A25 (CYP71A25) from Arabidopsis thaliana (Mouse-ear cress).